A 479-amino-acid polypeptide reads, in one-letter code: Proline--tRNA ligase (479 aa).

The protein belongs to the class-II aminoacyl-tRNA synthetase family. ProS type 3 subfamily. Homodimer.

The protein localises to the cytoplasm. The catalysed reaction is tRNA(Pro) + L-proline + ATP = L-prolyl-tRNA(Pro) + AMP + diphosphate. Its function is as follows. Catalyzes the attachment of proline to tRNA(Pro) in a two-step reaction: proline is first activated by ATP to form Pro-AMP and then transferred to the acceptor end of tRNA(Pro). This is Proline--tRNA ligase from Agathobacter rectalis (strain ATCC 33656 / DSM 3377 / JCM 17463 / KCTC 5835 / VPI 0990) (Eubacterium rectale).